Here is a 188-residue protein sequence, read N- to C-terminus: Elongation factor P (188 aa).

This sequence belongs to the elongation factor P family.

The protein localises to the cytoplasm. Its pathway is protein biosynthesis; polypeptide chain elongation. Functionally, involved in peptide bond synthesis. Stimulates efficient translation and peptide-bond synthesis on native or reconstituted 70S ribosomes in vitro. Probably functions indirectly by altering the affinity of the ribosome for aminoacyl-tRNA, thus increasing their reactivity as acceptors for peptidyl transferase. This Rickettsia akari (strain Hartford) protein is Elongation factor P.